Here is a 419-residue protein sequence, read N- to C-terminus: L-rhamnose isomerase (419 aa).

The Mn(2+) site is built by His262, Asp294, and Asp296.

This sequence belongs to the rhamnose isomerase family. Homotetramer. Mn(2+) is required as a cofactor.

The protein localises to the cytoplasm. It catalyses the reaction L-rhamnopyranose = L-rhamnulose. It participates in carbohydrate degradation; L-rhamnose degradation; glycerone phosphate from L-rhamnose: step 1/3. Its function is as follows. Catalyzes the interconversion of L-rhamnose and L-rhamnulose. This is L-rhamnose isomerase from Salmonella choleraesuis (strain SC-B67).